The following is a 173-amino-acid chain: Crossover junction endodeoxyribonuclease RuvC (173 aa).

Catalysis depends on residues Asp8, Glu67, and Asp139. Positions 8, 67, and 139 each coordinate Mg(2+).

It belongs to the RuvC family. As to quaternary structure, homodimer which binds Holliday junction (HJ) DNA. The HJ becomes 2-fold symmetrical on binding to RuvC with unstacked arms; it has a different conformation from HJ DNA in complex with RuvA. In the full resolvosome a probable DNA-RuvA(4)-RuvB(12)-RuvC(2) complex forms which resolves the HJ. Mg(2+) is required as a cofactor.

Its subcellular location is the cytoplasm. It carries out the reaction Endonucleolytic cleavage at a junction such as a reciprocal single-stranded crossover between two homologous DNA duplexes (Holliday junction).. The RuvA-RuvB-RuvC complex processes Holliday junction (HJ) DNA during genetic recombination and DNA repair. Endonuclease that resolves HJ intermediates. Cleaves cruciform DNA by making single-stranded nicks across the HJ at symmetrical positions within the homologous arms, yielding a 5'-phosphate and a 3'-hydroxyl group; requires a central core of homology in the junction. The consensus cleavage sequence is 5'-(A/T)TT(C/G)-3'. Cleavage occurs on the 3'-side of the TT dinucleotide at the point of strand exchange. HJ branch migration catalyzed by RuvA-RuvB allows RuvC to scan DNA until it finds its consensus sequence, where it cleaves and resolves the cruciform DNA. The protein is Crossover junction endodeoxyribonuclease RuvC of Aliivibrio salmonicida (strain LFI1238) (Vibrio salmonicida (strain LFI1238)).